A 316-amino-acid polypeptide reads, in one-letter code: L-lactate dehydrogenase 3 (316 aa).

NAD(+) contacts are provided by Val-16, Asp-37, Arg-42, and Tyr-68. A substrate-binding site is contributed by Arg-91. NAD(+) contacts are provided by residues Ser-104, 121–123 (ASN), and Thr-146. Substrate is bound at residue 123–126 (NPVD). A substrate-binding site is contributed by 151-154 (DSSR). Residues Arg-156 and His-171 each contribute to the beta-D-fructose 1,6-bisphosphate site. His-178 serves as the catalytic Proton acceptor. Thr-233 is a substrate binding site.

It belongs to the LDH/MDH superfamily. LDH family. Homotetramer.

It localises to the cytoplasm. It catalyses the reaction (S)-lactate + NAD(+) = pyruvate + NADH + H(+). It participates in fermentation; pyruvate fermentation to lactate; (S)-lactate from pyruvate: step 1/1. Allosterically activated by fructose 1,6-bisphosphate (FBP). Functionally, catalyzes the conversion of lactate to pyruvate. This is L-lactate dehydrogenase 3 from Bacillus thuringiensis subsp. konkukian (strain 97-27).